We begin with the raw amino-acid sequence, 258 residues long: Probable phthiotriol/phenolphthiotriol dimycocerosates methyltransferase 2 (258 aa).

The protein belongs to the methyltransferase superfamily. Phthiotriol/phenolphthiotriol dimycocerosates methyltransferase family.

Functionally, catalyzes the methylation of the lipid moiety of the intermediate compounds phthiotriol and glycosylated phenolphthiotriol dimycoserosates to form phthiocerol dimycocerosates (DIM A) and glycosylated phenolphthiocerol dimycocerosates (PGL). The polypeptide is Probable phthiotriol/phenolphthiotriol dimycocerosates methyltransferase 2 (Mycobacterium ulcerans (strain Agy99)).